The chain runs to 430 residues: GTPase Obg (430 aa).

In terms of domain architecture, Obg spans 1 to 158 (MFVDQVKISL…LEVTLELKLL (158 aa)). The disordered stretch occupies residues 118-145 (RGGRGGRGNSRFATPRNPAPDFSENGEP). Residues 159–329 (ADVGLVGFPS…LLYQIADKLE (171 aa)) form the OBG-type G domain. GTP-binding positions include 165 to 172 (GFPSVGKS), 190 to 194 (FTTIK), 212 to 215 (DLPG), 282 to 285 (NKMD), and 310 to 312 (STI). Ser-172 and Thr-192 together coordinate Mg(2+). Residues 352–430 (KHTPSADKFT…ILGGEFEFVE (79 aa)) form the OCT domain.

It belongs to the TRAFAC class OBG-HflX-like GTPase superfamily. OBG GTPase family. In terms of assembly, monomer. It depends on Mg(2+) as a cofactor.

It localises to the cytoplasm. Functionally, an essential GTPase which binds GTP, GDP and possibly (p)ppGpp with moderate affinity, with high nucleotide exchange rates and a fairly low GTP hydrolysis rate. Plays a role in control of the cell cycle, stress response, ribosome biogenesis and in those bacteria that undergo differentiation, in morphogenesis control. This Staphylococcus epidermidis (strain ATCC 12228 / FDA PCI 1200) protein is GTPase Obg.